We begin with the raw amino-acid sequence, 245 residues long: Large ribosomal subunit protein uL4 (245 aa).

Residues 1–13 (MSRVATSDPSVTA) are compositionally biased toward polar residues. Disordered regions lie at residues 1–28 (MSRVATSDPSVTARTVAVHAPNGGEGGS), 56–114 (ARQG…QRTP), and 224–245 (TSTAGTEAAAGTEGVAGAEENK). The segment covering 59 to 71 (GTHDTKTRGEVRG) has biased composition (basic and acidic residues). Residues 72–83 (GGRKPYRQKGTG) are compositionally biased toward basic residues.

Belongs to the universal ribosomal protein uL4 family. In terms of assembly, part of the 50S ribosomal subunit.

Its function is as follows. One of the primary rRNA binding proteins, this protein initially binds near the 5'-end of the 23S rRNA. It is important during the early stages of 50S assembly. It makes multiple contacts with different domains of the 23S rRNA in the assembled 50S subunit and ribosome. Functionally, forms part of the polypeptide exit tunnel. The polypeptide is Large ribosomal subunit protein uL4 (Frankia casuarinae (strain DSM 45818 / CECT 9043 / HFP020203 / CcI3)).